The chain runs to 2548 residues: Variant-silencing SET domain-containing protein (2548 aa).

Over residues 37–48 the composition is skewed to acidic residues; the sequence is IDDDDDDDNDNN. Disordered regions lie at residues 37–61, 336–379, and 585–629; these read IDDDDDDDNDNNEEPKEMNINKTNN, GDPK…DDDN, and SVDR…NTQT. Positions 336–357 are enriched in basic and acidic residues; the sequence is GDPKKRIERNKQEIEDHRREQD. The segment covering 358–378 has biased composition (acidic residues); the sequence is GENDQEEDNYDDYDDEDDDDD. A compositionally biased stretch (low complexity) spans 602-616; it reads NGSNNNNSSSNNNNN. A compositionally biased stretch (polar residues) spans 617-629; the sequence is ITHITNDCDNTQT. The segment at 787–846 adopts a PHD-type 1 zinc-finger fold; sequence FYLCEFCEQNIFDMNNMIKKDKAKECMYRCNISCGRTFHKACVCYIKNNDNYICFFCLYD. Basic residues predominate over residues 929 to 944; the sequence is IKRRHIYRKRRRRGPR. Disordered regions lie at residues 929–1054, 1546–1575, 1713–1732, and 1772–1822; these read IKRR…CDEN, EKNTKNKLCNNDNNNNNNNKGKNTKYNTLD, EQGSINNAKHNEQGSINNAK, and INNA…DDHR. The segment covering 986-1016 has biased composition (acidic residues); it reads DNNDDNNDNNDDNNDNNDDNNDNNDNNDDNN. 2 stretches are compositionally biased toward low complexity: residues 1017–1050 and 1551–1572; these read NDNNNNNNNDNNDNNNNNNNNNNNNDNDNNNNNN and NKLCNNDNNNNNNNKGKNTKYN. The segment covering 1714 to 1732 has biased composition (polar residues); sequence QGSINNAKHNEQGSINNAK. The AWS domain occupies 2067–2117; it reads SDDYKCLCQGECNLYTCYNSLSNIQCSKSRCNLPEKIQDRKCFNRPFRKSF. The 122-residue stretch at 2119–2240 folds into the SET domain; that stretch reads KDLEIKKTEK…SGEEITYNYS (122 aa). Residue Tyr-2239 coordinates S-adenosyl-L-methionine. Residues 2423–2471 form a PHD-type 2 zinc finger; the sequence is DEVCRKCKSCGNLTMCDKCFQSYHQLCGNMHSKMYKNNELVLCRFCQKY.

This sequence belongs to the class V-like SAM-binding methyltransferase superfamily.

It is found in the nucleus. The protein resides in the chromosome. It catalyses the reaction L-lysyl(36)-[histone H3] + 3 S-adenosyl-L-methionine = N(6),N(6),N(6)-trimethyl-L-lysyl(36)-[histone H3] + 3 S-adenosyl-L-homocysteine + 3 H(+). Functionally, histone methyltransferase that specifically represses expression of the surface antigen-coding var genes by mediating trimethylation of 'Lys-36' of histone H3 (H3K36me3) on var genes. SETVS-dependent H3K36me3 is specifically involved in var genes silencing, a central step malaria pathogenesis: each parasite contains 60 distinct var genes that each code for a different PfEMP1 protein. During infection, the clonal parasite population expresses only 1 gene at a time, while the 59 other var genes are silenced. The parasite then switches to the expression of a new variant antigen as an immune-evasion mechanism to avoid the host antibody response. Represses expression of both var mRNA and antisense long non-coding RNA. The polypeptide is Variant-silencing SET domain-containing protein (SETVS) (Plasmodium falciparum (isolate 3D7)).